A 284-amino-acid chain; its full sequence is Release factor glutamine methyltransferase (284 aa).

Residues 123-127 (GTGTG), aspartate 146, tryptophan 174, and asparagine 189 contribute to the S-adenosyl-L-methionine site. Position 189–192 (189–192 (NPPY)) interacts with substrate.

The protein belongs to the protein N5-glutamine methyltransferase family. PrmC subfamily.

The enzyme catalyses L-glutaminyl-[peptide chain release factor] + S-adenosyl-L-methionine = N(5)-methyl-L-glutaminyl-[peptide chain release factor] + S-adenosyl-L-homocysteine + H(+). Functionally, methylates the class 1 translation termination release factors RF1/PrfA and RF2/PrfB on the glutamine residue of the universally conserved GGQ motif. This is Release factor glutamine methyltransferase from Francisella tularensis subsp. tularensis (strain SCHU S4 / Schu 4).